The following is a 535-amino-acid chain: Probable C4-dicarboxylate sensor kinase (535 aa).

The Cytoplasmic segment spans residues 1-11 (MNKKKLSIRWK). A helical transmembrane segment spans residues 12–32 (ITILSYILVIFSFLIGGIVLI). Topologically, residues 33 to 172 (GNIQHTEERE…IADILLHLKR (140 aa)) are extracellular. Residues 173 to 193 (DIAFIVVLTLGFGLAGSFLLA) traverse the membrane as a helical segment. Topologically, residues 194-535 (RHIKKQMFQL…MKGEEAQHGS (342 aa)) are cytoplasmic. In terms of domain architecture, PAS spans 213 to 276 (EERTATFHSM…PEIVERNKAV (64 aa)). A Histidine kinase domain is found at 333–528 (VQNHEHMNKL…SFSIVFPMKG (196 aa)). Histidine 336 carries the post-translational modification Phosphohistidine; by autocatalysis.

Its subcellular location is the cell membrane. The enzyme catalyses ATP + protein L-histidine = ADP + protein N-phospho-L-histidine.. In terms of biological role, member of the two-component regulatory system DctS/DctR. Probably activates DctR by phosphorylation. Essential for expression of dctP. This chain is Probable C4-dicarboxylate sensor kinase (dctS), found in Bacillus subtilis (strain 168).